A 44-amino-acid chain; its full sequence is uncharacterized protein (44 aa).

Positions 1–28 (MLRDLGRRVAIAAILSGIILGGMSISLA) are cleaved as a signal peptide.

This is an uncharacterized protein from Bacillus subtilis (strain 168).